The chain runs to 231 residues: Ribonuclease 3 (231 aa).

One can recognise an RNase III domain in the interval 6–135 (AAMLKERFGI…FVGALYLDQG (130 aa)). Glu-48 contributes to the Mg(2+) binding site. The active site involves Asp-52. Residues Asp-121 and Glu-124 each coordinate Mg(2+). The active site involves Glu-124. The region spanning 161–230 (DYKTTLQEYL…ARQAYSQLQQ (70 aa)) is the DRBM domain. A disordered region spans residues 209–231 (WGHSKKEAEQSAARQAYSQLQQK). Over residues 220–231 (AARQAYSQLQQK) the composition is skewed to polar residues.

Belongs to the ribonuclease III family. In terms of assembly, homodimer. It depends on Mg(2+) as a cofactor.

Its subcellular location is the cytoplasm. The catalysed reaction is Endonucleolytic cleavage to 5'-phosphomonoester.. Digests double-stranded RNA. Involved in the processing of primary rRNA transcript to yield the immediate precursors to the large and small rRNAs (23S and 16S). Processes some mRNAs, and tRNAs when they are encoded in the rRNA operon. Processes pre-crRNA and tracrRNA of type II CRISPR loci if present in the organism. In Lactiplantibacillus plantarum (strain ATCC BAA-793 / NCIMB 8826 / WCFS1) (Lactobacillus plantarum), this protein is Ribonuclease 3.